We begin with the raw amino-acid sequence, 380 residues long: MKKPIGILSPGVALGTAGGAMSSKFFLMALATFFSFAQVVIEANSWWSLGMNNPVQMSEVHIIGAQPLCSQLAGLSQGQKKLCHLYQDHMQYIGEGAKTGIKECQYQFRHRRWNCSTVDNTSVFGRVMQIGSRETAFTYAVSAAGVVNAMSRACREGELSTCGCSRAARPKDLPRDWLWGGCGDNIDYGYRFAKEFVDARERERIHAKGSYESARILMNLHNNEAGRRTVYNLADVACKCHGVSGSCSLKTCWLQLADFRKVGDALKEKYDSAAAMRLNSRGKLVQVNSRFNSPTTQDLVYIDPSPDYCVRNESTGSLGTQGRLCNKTSEGMDGCELMCCGRGYDQFKTVQTERCHCKFHWCCYVKCKKCTEIVDQFVCK.

The N-terminal stretch at Met-1–Ala-37 is a signal peptide. Residues Gln-38 to His-61 constitute a propeptide that is removed on maturation. Cys-104 and Cys-115 are disulfide-bonded. N-linked (GlcNAc...) asparagine glycans are attached at residues Asn-114 and Asn-120. Cystine bridges form between Cys-154–Cys-162, Cys-164–Cys-182, Cys-238–Cys-252, Cys-240–Cys-247, Cys-309–Cys-340, Cys-325–Cys-335, Cys-339–Cys-379, Cys-355–Cys-370, Cys-357–Cys-367, and Cys-362–Cys-363. Ser-244 carries O-palmitoleoyl serine; by PORCN lipidation. Asn-312 and Asn-326 each carry an N-linked (GlcNAc...) asparagine glycan.

The protein belongs to the Wnt family. As to quaternary structure, forms a soluble 1:1 complex with AFM; this prevents oligomerization and is required for prolonged biological activity. The complex with AFM may represent the physiological form in body fluids. Homooligomer; disulfide-linked, leading to inactivation (in vitro). Interacts with PORCN. Interacts with WLS. Interacts with glypican GCP3. Interacts with PKD1 (via extracellular domain). Interacts with TMEM67. Post-translationally, glycosylation is necessary for secretion but not for activity. In terms of processing, palmitoleoylation is required for efficient binding to frizzled receptors. Depalmitoleoylation leads to Wnt signaling pathway inhibition. Proteolytic processing by TIKI1 and TIKI2 promotes oxidation and formation of large disulfide-bond oligomers, leading to inactivation of WNT5A.

Its subcellular location is the secreted. The protein resides in the extracellular space. It is found in the extracellular matrix. Ligand for members of the frizzled family of seven transmembrane receptors. Can activate or inhibit canonical Wnt signaling, depending on receptor context. In the presence of FZD4, activates beta-catenin signaling. In the presence of ROR2, inhibits the canonical Wnt pathway by promoting beta-catenin degradation through a GSK3-independent pathway which involves down-regulation of beta-catenin-induced reporter gene expression. Suppression of the canonical pathway allows chondrogenesis to occur and inhibits tumor formation. Stimulates cell migration. Decreases proliferation, migration, invasiveness and clonogenicity of carcinoma cells and may act as a tumor suppressor. Mediates motility of melanoma cells. Required during embryogenesis for extension of the primary anterior-posterior axis and for outgrowth of limbs and the genital tubercle. Inhibits type II collagen expression in chondrocytes. This Rattus norvegicus (Rat) protein is Protein Wnt-5a (Wnt5a).